The chain runs to 224 residues: Dehydration-responsive element-binding protein 1G (224 aa).

The span at 1-16 shows a compositional bias: polar residues; it reads MDVSAALSSDYSSGTP. Residues 1–46 are disordered; it reads MDVSAALSSDYSSGTPSPVAADADDGSSAYMTVSSAPPKRRAGRTK. A DNA-binding region (AP2/ERF) is located at residues 54–111; the sequence is VFKGVRRRNPGRWVCEVREPHGKQRIWLGTFETAEMAARAHDVAALALRGRAACLNFA. Disordered stretches follow at residues 139 to 161 and 200 to 224; these read AFRP…SGAT and PPMA…LWSY.

The protein belongs to the AP2/ERF transcription factor family. ERF subfamily.

Its subcellular location is the nucleus. Its function is as follows. Transcriptional activator that binds specifically to the DNA sequence 5'-[AG]CCGAC-3'. Binding to the C-repeat/DRE element mediates high salinity- and dehydration-inducible transcription. This is Dehydration-responsive element-binding protein 1G (DREB1G) from Oryza sativa subsp. japonica (Rice).